The following is a 300-amino-acid chain: Mitochondrial carnitine/acylcarnitine carrier-like protein (300 aa).

Solcar repeat units lie at residues 2–93, 102–201, and 211–298; these read ADAW…MEGL, LTIS…FKRF, and LGQG…TRSS. The next 6 membrane-spanning stretches (helical) occupy residues 8 to 28, 64 to 84, 108 to 128, 176 to 195, 211 to 231, and 273 to 292; these read LASGTVGGAAQLVVGHPFDTI, GLYKGMGAPLATVAAFNAVLF, FVAGAGAGFAVSFLACPTELI, GLFPTFAREVPGNATMFAAY, LGQGSLIMAGGVAGASFWGIV, and GFGPAMARSVPANAACFLAY.

The protein belongs to the mitochondrial carrier (TC 2.A.29) family. In terms of tissue distribution, high expression in cotyledons, leaves, flowers and developing siliques. Lower expression in roots and maturing siliques. Not detected in meristematic tissues.

The protein localises to the mitochondrion inner membrane. Its function is as follows. Involved in photorespiratory metabolism. Acts probably as a carrier for a glycine decarboxylase (GDC) cofactor or, alternatively, may act as a mitochondrial glycine shuttle. Involved in the transition from the embryonic stage to the juvenile autotrophic stage. The chain is Mitochondrial carnitine/acylcarnitine carrier-like protein (BOU) from Arabidopsis thaliana (Mouse-ear cress).